Consider the following 501-residue polypeptide: Glutathione gamma-glutamylcysteinyltransferase 1 (501 aa).

A Peptidase C83 domain is found at 1-221; that stretch reads MAMAGLYRRL…GFMLISRPHR (221 aa). Residues Cys-56, His-162, and Asp-180 contribute to the active site.

It belongs to the phytochelatin synthase family. As to expression, expressed in roots, nodules and leaves.

The enzyme catalyses [Glu(-Cys)](n)-Gly + glutathione + H(+) = [Glu(-Cys)](n+1)-Gly + glycine. Requires cadmium for activity. Also activated in vitro by Zn(2+), Cu(2+), Fe(2+) or Fe(3+) ions, but not by Co(2+) or Ni(2+) ions. Involved in the synthesis of phytochelatins (PC) and homophytochelatins (hPC), the heavy-metal-binding peptides of plants. The protein is Glutathione gamma-glutamylcysteinyltransferase 1 (PCS1) of Lotus japonicus (Lotus corniculatus var. japonicus).